Reading from the N-terminus, the 199-residue chain is Recombination protein RecR (199 aa).

The C4-type zinc finger occupies 57 to 72 (CQSCRTYTEETLCPIC). One can recognise a Toprim domain in the interval 81-176 (STICVVETPA…MISRIAHGVP (96 aa)).

The protein belongs to the RecR family.

May play a role in DNA repair. It seems to be involved in an RecBC-independent recombinational process of DNA repair. It may act with RecF and RecO. In Shewanella putrefaciens (strain CN-32 / ATCC BAA-453), this protein is Recombination protein RecR.